The following is a 193-amino-acid chain: Ion-translocating oxidoreductase complex subunit A (193 aa).

6 consecutive transmembrane segments (helical) span residues 4 to 24 (FLLL…QFLG), 39 to 59 (IGMS…SYLV), 63 to 83 (ILLP…VIAV), 102 to 122 (LLGI…VALL), 134 to 154 (VIYG…FAAM), and 171 to 191 (SISM…TGLV).

This sequence belongs to the NqrDE/RnfAE family. In terms of assembly, the complex is composed of six subunits: RnfA, RnfB, RnfC, RnfD, RnfE and RnfG.

It localises to the cell inner membrane. Its function is as follows. Part of a membrane-bound complex that couples electron transfer with translocation of ions across the membrane. The chain is Ion-translocating oxidoreductase complex subunit A from Pseudoalteromonas atlantica (strain T6c / ATCC BAA-1087).